Consider the following 118-residue polypeptide: Ly-6/neurotoxin-like protein 1 (118 aa).

The first 22 residues, 1–22, serve as a signal peptide directing secretion; the sequence is MTPLLTLFLVVLMGLPLAPVQA. Residues 23–107 form the UPAR/Ly6 domain; that stretch reads LDCHVCAYNG…LAIPATLALA (85 aa). 5 disulfide bridges follow: C25/C48, C28/C35, C41/C66, C70/C87, and C88/C93. S95 is lipidated: GPI-anchor amidated serine. A propeptide spans 96-118 (removed in mature form); the sequence is AGLAIPATLALAPVLLATLWGLL.

As to quaternary structure, interacts with nAChRs containing alpha-4:beta-2 (CHRNA4:CHRNB2) and alpha-7 (CHRNA7) subunits. Interacts with CHRNA4 probably in the endoplasmic reticulum prior to nAChR pentameric assembly. Interacts with KCNA2/Potassium voltage-gated channel subfamily A member 2. Expressed in lung predominantly in airway epithelial cells, submucous glands, and smooth muscle cells, in endothelial and smooth muscle cells in vessel walls and in alveolar type II cells (at protein level). Also expressed in brain.

The protein resides in the cell membrane. The protein localises to the cell projection. It localises to the dendrite. It is found in the endoplasmic reticulum. Its function is as follows. Acts in different tissues through interaction to nicotinic acetylcholine receptors (nAChRs). The proposed role as modulator of nAChR activity seems to be dependent on the nAChR subtype and stoichiometry, and to involve an effect on nAChR trafficking and its cell surface expression, and on single channel properties of the nAChR inserted in the plasma membrane. Modulates functional properties of nicotinic acetylcholine receptors (nAChRs) to prevent excessive excitation, and hence neurodegeneration. Enhances desensitization by increasing both the rate and extent of desensitization of alpha-4:beta-2-containing nAChRs and slowing recovery from desensitization. Promotes large amplitude ACh-evoked currents through alpha-4:beta-2 nAChRs. Is involved in regulation of the nAChR pentameric assembly in the endoplasmic reticulum. Shifts stoichiometry from high sensitivity alpha-4(2):beta-2(3) to low sensitivity alpha-4(3):beta-2(2) nAChR. In vitro modulates alpha-3:beta-4-containing nAChRs. Reduces cell surface expression of (alpha-3:beta-4)(2):beta-4 and (alpha-3:beta-4)(2):alpha-5 nAChRs suggesting an interaction with nAChR alpha-3(-):(+)beta-4 subunit interfaces and an allosteric mode. Corresponding single channel effects characterized by decreased unitary conductance, altered burst proportions and enhanced desensitization/inactivation seem to depend on nAChR alpha:alpha subunit interfaces and are greater in (alpha-3:beta-2)(2):alpha-3 when compared to (alpha-3:beta-2)(2):alpha-5 nAChRs. Prevents plasticity in the primary visual cortex late in life. This is Ly-6/neurotoxin-like protein 1 from Macaca mulatta (Rhesus macaque).